The sequence spans 382 residues: Succinate--CoA ligase [ADP-forming] subunit beta 1 (382 aa).

An ATP-grasp domain is found at 9-235 (KQIFAKHGIR…ATEEDPLERE (227 aa)). ATP contacts are provided by residues lysine 45, 52–54 (GRG), glutamate 91, leucine 94, and glutamate 99. Positions 191 and 204 each coordinate Mg(2+). Substrate is bound at residue asparagine 255.

The protein belongs to the succinate/malate CoA ligase beta subunit family. As to quaternary structure, heterotetramer of two alpha and two beta subunits. It depends on Mg(2+) as a cofactor.

It catalyses the reaction succinate + ATP + CoA = succinyl-CoA + ADP + phosphate. The enzyme catalyses GTP + succinate + CoA = succinyl-CoA + GDP + phosphate. Its pathway is carbohydrate metabolism; tricarboxylic acid cycle; succinate from succinyl-CoA (ligase route): step 1/1. Succinyl-CoA synthetase functions in the citric acid cycle (TCA), coupling the hydrolysis of succinyl-CoA to the synthesis of either ATP or GTP and thus represents the only step of substrate-level phosphorylation in the TCA. The beta subunit provides nucleotide specificity of the enzyme and binds the substrate succinate, while the binding sites for coenzyme A and phosphate are found in the alpha subunit. This chain is Succinate--CoA ligase [ADP-forming] subunit beta 1, found in Archaeoglobus fulgidus (strain ATCC 49558 / DSM 4304 / JCM 9628 / NBRC 100126 / VC-16).